Reading from the N-terminus, the 64-residue chain is Weak toxin CM-9a (64 aa).

Cystine bridges form between cysteine 3–cysteine 24, cysteine 6–cysteine 11, cysteine 17–cysteine 41, cysteine 45–cysteine 56, and cysteine 57–cysteine 62.

This sequence belongs to the three-finger toxin family. Ancestral subfamily. Orphan group II sub-subfamily. In terms of tissue distribution, expressed by the venom gland.

The protein localises to the secreted. In terms of biological role, binds with low affinity to muscular (alpha-1-beta-1-delta-epsilon/CHRNA1-CHRNB1-CHRND-CHRNE) and very low affinity to neuronal (alpha-7/CHRNA7) nicotinic acetylcholine receptor (nAChR). In Naja kaouthia (Monocled cobra), this protein is Weak toxin CM-9a.